Reading from the N-terminus, the 254-residue chain is 4-hydroxy-tetrahydrodipicolinate reductase (254 aa).

NAD(+)-binding positions include 8–13 (GASGKM), 87–89 (GTT), and 111–114 (ATNM). Histidine 143 acts as the Proton donor/acceptor in catalysis. Histidine 144 contributes to the (S)-2,3,4,5-tetrahydrodipicolinate binding site. Catalysis depends on lysine 147, which acts as the Proton donor. 153-154 (GT) lines the (S)-2,3,4,5-tetrahydrodipicolinate pocket.

This sequence belongs to the DapB family.

It is found in the cytoplasm. The catalysed reaction is (S)-2,3,4,5-tetrahydrodipicolinate + NAD(+) + H2O = (2S,4S)-4-hydroxy-2,3,4,5-tetrahydrodipicolinate + NADH + H(+). The enzyme catalyses (S)-2,3,4,5-tetrahydrodipicolinate + NADP(+) + H2O = (2S,4S)-4-hydroxy-2,3,4,5-tetrahydrodipicolinate + NADPH + H(+). It functions in the pathway amino-acid biosynthesis; L-lysine biosynthesis via DAP pathway; (S)-tetrahydrodipicolinate from L-aspartate: step 4/4. Catalyzes the conversion of 4-hydroxy-tetrahydrodipicolinate (HTPA) to tetrahydrodipicolinate. In Campylobacter curvus (strain 525.92), this protein is 4-hydroxy-tetrahydrodipicolinate reductase.